Consider the following 387-residue polypeptide: Xylose isomerase (387 aa).

Residues His53 and Asp56 contribute to the active site. Mg(2+) contacts are provided by Glu180, Glu216, His219, Asp244, Asp254, Asp256, and Asp286.

The protein belongs to the xylose isomerase family. Homotetramer. Mg(2+) is required as a cofactor.

It is found in the cytoplasm. The catalysed reaction is alpha-D-xylose = alpha-D-xylulofuranose. This is Xylose isomerase (xylA) from Thermus caldophilus.